The chain runs to 397 residues: Odorant receptor 59a (397 aa).

Topologically, residues 1 to 36 (MAEVRVDSLEFFKSHWTAWRYLGVAHFRVENWKNLY) are cytoplasmic. A helical transmembrane segment spans residues 37–57 (VFYSIVSNLLVTLCYPVHLGI). Residues 58 to 68 (SLFRNRTITED) lie on the Extracellular side of the membrane. An N-linked (GlcNAc...) asparagine glycan is attached at asparagine 62. A helical transmembrane segment spans residues 69–92 (ILNLTTFATCTACSVKCLLYAYNI). The Cytoplasmic segment spans residues 93 to 128 (KDVLEMERLLRLLDERVVGPEQRSIYGQVRVQLRNV). A helical membrane pass occupies residues 129–149 (LYVFIGIYMPCALFAELSFLF). The Extracellular portion of the chain corresponds to 150–179 (KEERGLMYPAWFPFDWLHSTRNYYIANAYQ). The helical transmembrane segment at 180–200 (IVGISFQLLQNYVSDCFPAVV) threads the bilayer. Topologically, residues 201-274 (LCLISSHIKM…IEAFISLPML (74 aa)) are cytoplasmic. A helical membrane pass occupies residues 275–295 (IQFTVTALNVCIGLAALVFFV). The Extracellular segment spans residues 296-301 (SEPMAR). A helical transmembrane segment spans residues 302–322 (MYFIFYSLAMPLQIFPSCFFG). The Cytoplasmic segment spans residues 323-372 (TDNEYWFGRLHYAAFSCNWHTQNRSFKRKMMLFVEQSLKKSTAVAGGMMR). A helical transmembrane segment spans residues 373–393 (IHLDTFFSTLKGAYSLFTIII). At 394 to 397 (RMRK) the chain is on the extracellular side.

Belongs to the insect chemoreceptor superfamily. Heteromeric odorant receptor channel (TC 1.A.69) family. Or2a subfamily. In terms of assembly, interacts with Orco. Complexes exist early in the endomembrane system in olfactory sensory neurons (OSNs), coupling these complexes to the conserved ciliary trafficking pathway. In terms of tissue distribution, expressed in neurons of the third antennal segment.

It is found in the cell membrane. Its function is as follows. Odorant receptor which mediates acceptance or avoidance behavior, depending on its substrates. The odorant receptor repertoire encodes a large collection of odor stimuli that vary widely in identity, intensity, and duration. May form a complex with Orco to form odorant-sensing units, providing sensitive and prolonged odorant signaling and calcium permeability. Involved in the behavioral responses to ethyl acetate, anisole, hexanoic acid, and pyrazines. This chain is Odorant receptor 59a (Or59a), found in Drosophila melanogaster (Fruit fly).